Consider the following 473-residue polypeptide: Ribulose bisphosphate carboxylase large chain (473 aa).

Substrate contacts are provided by asparagine 116 and threonine 166. Lysine 168 (proton acceptor) is an active-site residue. Position 170 (lysine 170) interacts with substrate. Mg(2+) is bound by residues lysine 194, aspartate 196, and glutamate 197. Lysine 194 bears the N6-carboxylysine mark. The active-site Proton acceptor is the histidine 287. Substrate is bound by residues arginine 288, histidine 320, and serine 372.

It belongs to the RuBisCO large chain family. Type I subfamily. In terms of assembly, heterohexadecamer of 8 large chains and 8 small chains. Requires Mg(2+) as cofactor.

It carries out the reaction 2 (2R)-3-phosphoglycerate + 2 H(+) = D-ribulose 1,5-bisphosphate + CO2 + H2O. The enzyme catalyses D-ribulose 1,5-bisphosphate + O2 = 2-phosphoglycolate + (2R)-3-phosphoglycerate + 2 H(+). In terms of biological role, ruBisCO catalyzes two reactions: the carboxylation of D-ribulose 1,5-bisphosphate, the primary event in carbon dioxide fixation, as well as the oxidative fragmentation of the pentose substrate. Both reactions occur simultaneously and in competition at the same active site. The chain is Ribulose bisphosphate carboxylase large chain from Alkalilimnicola ehrlichii (strain ATCC BAA-1101 / DSM 17681 / MLHE-1).